The sequence spans 690 residues: Calpain-9 (690 aa).

The tract at residues 1-24 is disordered; it reads MPYLYRAPGPQAHPVPKDARITHS. Positions 42–337 constitute a Calpain catalytic domain; that stretch reads LFEDADFPAS…FDKVEICNLT (296 aa). Ca(2+) is bound by residues L81, G83, and D88. C97 is a catalytic residue. Ca(2+) is bound at residue E167. Active-site residues include H254 and N278. Ca(2+)-binding residues include E284, D291, L312, D314, and E316. The interval 338 to 521 is domain III; that stretch reads PDALEEDAIH…PPDQETEEEQ (184 aa). The tract at residues 498–519 is disordered; the sequence is GNVDIDLPEPPKPTPPDQETEE. 3 consecutive EF-hand domains span residues 518–552, 561–589, and 591–626; these read EEEQ…VLQK, LSLI…FKVF, and DKLK…AGFQ. The domain IV stretch occupies residues 522–690; that stretch reads RFRALFEQVA…NEFIHLTMNI (169 aa). The Ca(2+) site is built by D574, S576, N578, K580, E585, D604, D606, S608, T610, and E615.

It belongs to the peptidase C2 family. In terms of tissue distribution, expressed predominantly in stomach.

Functionally, calcium-regulated non-lysosomal thiol-protease. This is Calpain-9 (CAPN9) from Homo sapiens (Human).